The sequence spans 94 residues: Small ribosomal subunit protein uS19 (94 aa).

The protein belongs to the universal ribosomal protein uS19 family.

Its function is as follows. Protein S19 forms a complex with S13 that binds strongly to the 16S ribosomal RNA. This Natranaerobius thermophilus (strain ATCC BAA-1301 / DSM 18059 / JW/NM-WN-LF) protein is Small ribosomal subunit protein uS19.